The chain runs to 63 residues: Sec-independent protein translocase protein TatA (63 aa).

A helical transmembrane segment spans residues 1 to 21; that stretch reads MGGLSVGSVVLIALVALLIFG.

This sequence belongs to the TatA/E family. Forms a complex with TatC.

It is found in the cell membrane. Part of the twin-arginine translocation (Tat) system that transports large folded proteins containing a characteristic twin-arginine motif in their signal peptide across membranes. TatA could form the protein-conducting channel of the Tat system. This Shouchella clausii (strain KSM-K16) (Alkalihalobacillus clausii) protein is Sec-independent protein translocase protein TatA.